A 223-amino-acid polypeptide reads, in one-letter code: Nitrate reductase gamma chain (223 aa).

The helical transmembrane segment at 2–27 threads the bilayer; the sequence is SGQILWGIMPYIVLTIFIGGHIYRYQ. Residues 28-45 lie on the Cytoplasmic side of the membrane; it reads HDQFGWTAKSSELLEKKK. The helical transmembrane segment at 46 to 68 threads the bilayer; that stretch reads LAAGSTLFHWGLLCVVGGHVMGI. Heme b-binding residues include histidine 54 and histidine 64. Over 69–81 the chain is Extracellular; it reads LIPEGVYASLGIS. The helical transmembrane segment at 82–111 threads the bilayer; it reads EHMYHKMAIGAGLPAGIAACTGLVILTYRR. Residues 112–123 are Cytoplasmic-facing; that stretch reads LFDKRIRKTSSP. A helical membrane pass occupies residues 124–147; sequence SDILTLLLLLFMMLSGVAATFLNI. Residues 148-180 are Extracellular-facing; that stretch reads DSKGFDYRTTVGPWFREIVLFRPDASLMESVPL. Residues 181–196 form a helical membrane-spanning segment; sequence WFKFHIVIGYVVFILW. Positions 185 and 203 each coordinate heme b. Residues 197–223 lie on the Cytoplasmic side of the membrane; it reads PFTRLVHVFSLPLKYLTRSYVVYRKRS.

The cofactor is heme.

It is found in the cell membrane. It carries out the reaction nitrate + a quinol = a quinone + nitrite + H2O. The gamma chain is a membrane-embedded heme-iron unit resembling cytochrome b, which transfers electrons from quinones to the beta subunit. This chain is Nitrate reductase gamma chain (narI), found in Bacillus subtilis (strain 168).